Consider the following 204-residue polypeptide: Methyl-CpG-binding domain-containing protein 1 (204 aa).

A disordered region spans residues 1–46; that stretch reads MLPFPAMNLKKSRSENSSVASSGSKIEEQTEKSAEPTTIKVQKKAG. Positions 15-24 are enriched in polar residues; it reads ENSSVASSGS. A compositionally biased stretch (basic and acidic residues) spans 25 to 34; that stretch reads KIEEQTEKSA. The segment at 49–104 adopts a CW-type zinc-finger fold; the sequence is GRSIDVFAVQCEKCMKWRKIDTQDEYEDIRSRVQEDPFFCKTKEGVSCEDVGDLNY. The short motif at 58 to 96 is the MBD-associated domain (MAD) element; it reads QCEKCMKWRKIDTQDEYEDIRSRVQEDPFFCKTKEGVSC. 4 residues coordinate Zn(2+): cysteine 59, cysteine 62, cysteine 88, and cysteine 96. The MBD domain maps to 110-180; the sequence is WVIDKPGLPR…GDFNFTVPKV (71 aa).

As to expression, mostly expressed in flowers and buds.

Its subcellular location is the nucleus. In terms of biological role, probable transcriptional regulator. This is Methyl-CpG-binding domain-containing protein 1 (MBD1) from Arabidopsis thaliana (Mouse-ear cress).